The following is a 547-amino-acid chain: MAAKDVVFGGEARARMVEGVNILANAVKVTLGPKGRNVVLERSFGAPTVTKDGVSVAKEIELKDKLQNMGAQLVKEVASKTNDIAGDGTTTATVLAQAIVREGAKYVAAGLNPMDLKRGIDKAVAALVEELKKQSKATTTSKEIAQVGSISANSDESVGSIIAEAMDKVGKEGVITVEEGKSLANELDVVEGMQFDRGYLSPYFINNPEKQVALLDNPFVLLFDKKISNIRDLLPTLEAVAKAGRPLLIIAEDVEGEALATLVVNTIRGILKVVAVKAPGFGDRRKAMLEDIAILTGGKVIAEEVGLALDKVTLEDLGQAVRIEIGKENTTIIDGAGQAAEIEARVKQIRIQIEEATSDYDREKLQERVAKLAGGVAVIKVGAATEVEMKEKKARVEDALHATRAAVEEGIVAGGGVALLRAKQAVGDLKTGDAEQDAGIKLIMKAIEAPLREIVANAGGEPSVVVNAVLNGSGNYGFNAANDTYGDMLEMGILDPTKVTRTALQNAASVASLLLTTEAMIAESPKAEGGPAMPDMGGMGGMGGMGM.

ATP contacts are provided by residues 30–33 (TLGP), lysine 51, 87–91 (DGTTT), glycine 415, 479–481 (NAA), and aspartate 495.

This sequence belongs to the chaperonin (HSP60) family. Forms a cylinder of 14 subunits composed of two heptameric rings stacked back-to-back. Interacts with the co-chaperonin GroES.

It localises to the cytoplasm. The enzyme catalyses ATP + H2O + a folded polypeptide = ADP + phosphate + an unfolded polypeptide.. Its function is as follows. Together with its co-chaperonin GroES, plays an essential role in assisting protein folding. The GroEL-GroES system forms a nano-cage that allows encapsulation of the non-native substrate proteins and provides a physical environment optimized to promote and accelerate protein folding. The polypeptide is Chaperonin GroEL (Delftia acidovorans (strain DSM 14801 / SPH-1)).